The following is a 466-amino-acid chain: 3-isopropylmalate dehydratase large subunit (466 aa).

3 residues coordinate [4Fe-4S] cluster: Cys347, Cys407, and Cys410.

It belongs to the aconitase/IPM isomerase family. LeuC type 1 subfamily. Heterodimer of LeuC and LeuD. [4Fe-4S] cluster is required as a cofactor.

The enzyme catalyses (2R,3S)-3-isopropylmalate = (2S)-2-isopropylmalate. The protein operates within amino-acid biosynthesis; L-leucine biosynthesis; L-leucine from 3-methyl-2-oxobutanoate: step 2/4. In terms of biological role, catalyzes the isomerization between 2-isopropylmalate and 3-isopropylmalate, via the formation of 2-isopropylmaleate. The protein is 3-isopropylmalate dehydratase large subunit of Vibrio vulnificus (strain CMCP6).